A 549-amino-acid chain; its full sequence is Carboxylesterase 1C (549 aa).

An N-terminal signal peptide occupies residues 1–18; the sequence is MWLCALVWASLAVCPIWG. Asn-79 carries an N-linked (GlcNAc...) asparagine glycan. A disulfide bridge links Cys-87 with Cys-116. Ser-221 (acyl-ester intermediate) is an active-site residue. A disulfide bridge connects residues Cys-273 and Cys-284. 3 N-linked (GlcNAc...) asparagine glycosylation sites follow: Asn-274, Asn-275, and Asn-302. The Charge relay system role is filled by Glu-340. Residue Asn-375 is glycosylated (N-linked (GlcNAc...) asparagine). The active-site Charge relay system is the His-453. Ser-471 is subject to Phosphoserine. Residue Asn-476 is glycosylated (N-linked (GlcNAc...) asparagine). The Prevents secretion from ER motif lies at 546–549; sequence TEHT.

Belongs to the type-B carboxylesterase/lipase family.

The protein localises to the endoplasmic reticulum lumen. The enzyme catalyses a carboxylic ester + H2O = an alcohol + a carboxylate + H(+). Functionally, involved in the detoxification of xenobiotics and in the activation of ester and amide prodrugs. Involved in the extracellular metabolism of lung surfactant. This chain is Carboxylesterase 1C (Ces1c), found in Rattus norvegicus (Rat).